Here is a 149-residue protein sequence, read N- to C-terminus: Nucleoside diphosphate kinase (149 aa).

Positions 9, 57, 85, 91, 102, and 112 each coordinate ATP. The active-site Pros-phosphohistidine intermediate is histidine 115.

It belongs to the NDK family. The cofactor is Mg(2+).

The protein resides in the cytoplasm. It catalyses the reaction a 2'-deoxyribonucleoside 5'-diphosphate + ATP = a 2'-deoxyribonucleoside 5'-triphosphate + ADP. The enzyme catalyses a ribonucleoside 5'-diphosphate + ATP = a ribonucleoside 5'-triphosphate + ADP. Functionally, major role in the synthesis of nucleoside triphosphates other than ATP. The ATP gamma phosphate is transferred to the NDP beta phosphate via a ping-pong mechanism, using a phosphorylated active-site intermediate. The protein is Nucleoside diphosphate kinase of Methanospirillum hungatei JF-1 (strain ATCC 27890 / DSM 864 / NBRC 100397 / JF-1).